Here is a 4621-residue protein sequence, read N- to C-terminus: Dynein axonemal heavy chain 5 (4621 aa).

Residues 1-1938 form a stem region; that stretch reads MFRIGRRQLW…MIHITDVAFI (1938 aa). 2 coiled-coil regions span residues 260 to 305 and 803 to 825; these read WIKQ…DQLK and LENA…DLIE. The segment at 901 to 921 is disordered; that stretch reads VCHENASPSGNTSGRREGHSE. 2 coiled-coil regions span residues 1065 to 1094 and 1433 to 1462; these read AVKN…SINL and DVNI…DWQA. 4 AAA regions span residues 1939-2161, 2221-2440, 2547-2800, and 2913-3167; these read YQNE…VLRT, TAIS…IQNL, VYPP…IWQG, and LYNE…FRRS. Residues 1977 to 1984 and 2259 to 2266 contribute to the ATP site; these read GPAGTGKT and GPSGSGKT. The segment at 3182-3479 is stalk; the sequence is YKFIYEEKHM…QTLLEDADRC (298 aa). 3 coiled-coil regions span residues 3186–3299, 3423–3490, and 3729–3814; these read YEEK…QTIK, LKAN…STLI, and ILTE…EEYR. AAA stretches follow at residues 3564-3794 and 4009-4223; these read LIDA…EVTQ and ARKY…FIQN. The stretch at 4389–4417 forms a coiled coil; sequence FLRQEIDRMQRVLSLVRSTLTELKLAVDG.

This sequence belongs to the dynein heavy chain family. Interacts with DNAL1. Consists of at least two heavy chains and a number of intermediate and light chains. As to expression, strongly expressed in lung and kidney and weaker expression seen in brain, heart and testis. In the brain, expressed in ependymal cells lining the brain ventricles and the aqueduct.

The protein resides in the cytoplasm. It localises to the cytoskeleton. It is found in the cilium axoneme. Functionally, force generating protein of respiratory cilia. Produces force towards the minus ends of microtubules. Dynein has ATPase activity; the force-producing power stroke is thought to occur on release of ADP. Required for structural and functional integrity of the cilia of ependymal cells lining the brain ventricles. The sequence is that of Dynein axonemal heavy chain 5 from Mus musculus (Mouse).